Here is a 566-residue protein sequence, read N- to C-terminus: Protein kintoun (566 aa).

3 disordered regions span residues 183-298, 399-467, and 493-552; these read KYKG…TAPQ, EEEE…AETG, and QLEE…ESRI. The segment covering 208–290 has biased composition (low complexity); the sequence is PQQTTGPQQP…HQPTDPQQTT (83 aa). The span at 399-424 shows a compositional bias: basic and acidic residues; it reads EEEERRAEEEESRKGGDEDGELHPDC. Over residues 440-467 the composition is skewed to low complexity; the sequence is TPAADTHTPAADTHTPAADTHTPAAETG. The segment covering 535 to 550 has biased composition (basic and acidic residues); the sequence is DPAHTDPAHTDPEMES.

This sequence belongs to the PIH1 family. Kintoun subfamily.

Its subcellular location is the cytoplasm. The protein resides in the dynein axonemal particle. Functionally, required for cytoplasmic pre-assembly of axonemal dyneins, thereby playing a central role in motility in cilia and flagella. Involved in pre-assembly of dynein arm complexes in the cytoplasm before intraflagellar transport loads them for the ciliary compartment. The sequence is that of Protein kintoun from Danio rerio (Zebrafish).